Here is a 333-residue protein sequence, read N- to C-terminus: UDP-N-acetylenolpyruvoylglucosamine reductase (333 aa).

In terms of domain architecture, FAD-binding PCMH-type spans 12–176 (LPAQCRALIE…TSVVFRLPKD (165 aa)). The active site involves Arg153. Catalysis depends on Ser221, which acts as the Proton donor. Glu317 is an active-site residue.

It belongs to the MurB family. FAD is required as a cofactor.

Its subcellular location is the cytoplasm. The enzyme catalyses UDP-N-acetyl-alpha-D-muramate + NADP(+) = UDP-N-acetyl-3-O-(1-carboxyvinyl)-alpha-D-glucosamine + NADPH + H(+). The protein operates within cell wall biogenesis; peptidoglycan biosynthesis. Cell wall formation. The chain is UDP-N-acetylenolpyruvoylglucosamine reductase from Idiomarina loihiensis (strain ATCC BAA-735 / DSM 15497 / L2-TR).